The primary structure comprises 211 residues: ATP phosphoribosyltransferase (211 aa).

This sequence belongs to the ATP phosphoribosyltransferase family. Short subfamily. Heteromultimer composed of HisG and HisZ subunits.

The protein resides in the cytoplasm. It carries out the reaction 1-(5-phospho-beta-D-ribosyl)-ATP + diphosphate = 5-phospho-alpha-D-ribose 1-diphosphate + ATP. The protein operates within amino-acid biosynthesis; L-histidine biosynthesis; L-histidine from 5-phospho-alpha-D-ribose 1-diphosphate: step 1/9. Its function is as follows. Catalyzes the condensation of ATP and 5-phosphoribose 1-diphosphate to form N'-(5'-phosphoribosyl)-ATP (PR-ATP). Has a crucial role in the pathway because the rate of histidine biosynthesis seems to be controlled primarily by regulation of HisG enzymatic activity. This chain is ATP phosphoribosyltransferase, found in Bacillus cereus (strain ATCC 10987 / NRS 248).